The primary structure comprises 794 residues: Phenylalanine--tRNA ligase beta subunit (794 aa).

Residues 40–158 (NSLNSELILG…LKKYIGSDVK (119 aa)) form the tRNA-binding domain. One can recognise a B5 domain in the interval 402–477 (KNKQSLEIKL…RLYSYDKIDE (76 aa)). Positions 455, 461, 464, and 465 each coordinate Mg(2+). An FDX-ACB domain is found at 702 to 794 (SKFQSSSRDL…NIKQMKVVIR (93 aa)).

Belongs to the phenylalanyl-tRNA synthetase beta subunit family. Type 1 subfamily. In terms of assembly, tetramer of two alpha and two beta subunits. The cofactor is Mg(2+).

The protein localises to the cytoplasm. The catalysed reaction is tRNA(Phe) + L-phenylalanine + ATP = L-phenylalanyl-tRNA(Phe) + AMP + diphosphate + H(+). The polypeptide is Phenylalanine--tRNA ligase beta subunit (Mycoplasma mycoides subsp. mycoides SC (strain CCUG 32753 / NCTC 10114 / PG1)).